The primary structure comprises 164 residues: ATP synthase subunit b 2 (164 aa).

The helical transmembrane segment at 4–24 (TFWAFVGLVLFLALLAYFKVP) threads the bilayer.

The protein belongs to the ATPase B chain family. In terms of assembly, F-type ATPases have 2 components, F(1) - the catalytic core - and F(0) - the membrane proton channel. F(1) has five subunits: alpha(3), beta(3), gamma(1), delta(1), epsilon(1). F(0) has three main subunits: a(1), b(2) and c(10-14). The alpha and beta chains form an alternating ring which encloses part of the gamma chain. F(1) is attached to F(0) by a central stalk formed by the gamma and epsilon chains, while a peripheral stalk is formed by the delta and b chains.

It is found in the cell inner membrane. F(1)F(0) ATP synthase produces ATP from ADP in the presence of a proton or sodium gradient. F-type ATPases consist of two structural domains, F(1) containing the extramembraneous catalytic core and F(0) containing the membrane proton channel, linked together by a central stalk and a peripheral stalk. During catalysis, ATP synthesis in the catalytic domain of F(1) is coupled via a rotary mechanism of the central stalk subunits to proton translocation. Functionally, component of the F(0) channel, it forms part of the peripheral stalk, linking F(1) to F(0). The polypeptide is ATP synthase subunit b 2 (Bartonella quintana (strain Toulouse) (Rochalimaea quintana)).